The sequence spans 192 residues: Large ribosomal subunit protein uL3 (192 aa).

This sequence belongs to the universal ribosomal protein uL3 family. As to quaternary structure, part of the 50S ribosomal subunit. Forms a cluster with proteins L14 and L19.

One of the primary rRNA binding proteins, it binds directly near the 3'-end of the 23S rRNA, where it nucleates assembly of the 50S subunit. In Helicobacter hepaticus (strain ATCC 51449 / 3B1), this protein is Large ribosomal subunit protein uL3 (rplC).